A 248-amino-acid polypeptide reads, in one-letter code: Type III pantothenate kinase (248 aa).

Position 6-13 (6-13 (DCGNSFIK)) interacts with ATP. Residues tyrosine 92 and 99-102 (GLDR) contribute to the substrate site. Aspartate 101 (proton acceptor) is an active-site residue. Residue aspartate 121 coordinates K(+). Threonine 124 lines the ATP pocket. Threonine 180 serves as a coordination point for substrate.

The protein belongs to the type III pantothenate kinase family. Homodimer. It depends on NH4(+) as a cofactor. Requires K(+) as cofactor.

Its subcellular location is the cytoplasm. It carries out the reaction (R)-pantothenate + ATP = (R)-4'-phosphopantothenate + ADP + H(+). The protein operates within cofactor biosynthesis; coenzyme A biosynthesis; CoA from (R)-pantothenate: step 1/5. Catalyzes the phosphorylation of pantothenate (Pan), the first step in CoA biosynthesis. This is Type III pantothenate kinase from Ectopseudomonas mendocina (strain ymp) (Pseudomonas mendocina).